Here is a 476-residue protein sequence, read N- to C-terminus: Proline--tRNA ligase 2 (476 aa).

This sequence belongs to the class-II aminoacyl-tRNA synthetase family. ProS type 3 subfamily. As to quaternary structure, homodimer.

The protein localises to the cytoplasm. It carries out the reaction tRNA(Pro) + L-proline + ATP = L-prolyl-tRNA(Pro) + AMP + diphosphate. In terms of biological role, catalyzes the attachment of proline to tRNA(Pro) in a two-step reaction: proline is first activated by ATP to form Pro-AMP and then transferred to the acceptor end of tRNA(Pro). The protein is Proline--tRNA ligase 2 of Bacillus cereus (strain ATCC 10987 / NRS 248).